We begin with the raw amino-acid sequence, 208 residues long: FMN-dependent NADH:quinone oxidoreductase (208 aa).

Residues S17 to S19, M99 to L102, and S143 to G146 contribute to the FMN site.

It belongs to the azoreductase type 1 family. Homodimer. The cofactor is FMN.

It catalyses the reaction 2 a quinone + NADH + H(+) = 2 a 1,4-benzosemiquinone + NAD(+). The catalysed reaction is N,N-dimethyl-1,4-phenylenediamine + anthranilate + 2 NAD(+) = 2-(4-dimethylaminophenyl)diazenylbenzoate + 2 NADH + 2 H(+). Functionally, quinone reductase that provides resistance to thiol-specific stress caused by electrophilic quinones. In terms of biological role, also exhibits azoreductase activity. Catalyzes the reductive cleavage of the azo bond in aromatic azo compounds to the corresponding amines. The sequence is that of FMN-dependent NADH:quinone oxidoreductase from Staphylococcus aureus (strain bovine RF122 / ET3-1).